Consider the following 479-residue polypeptide: Signal recognition particle subunit SRP54 1 (479 aa).

A G-domain region spans residues 1 to 295 (MVLAELGGRI…DVKPFVSRLL (295 aa)). Residues 108–115 (GLQGAGKT), 190–194 (DTSGR), and 248–251 (TKMD) contribute to the GTP site. The segment at 296–479 (GKGDWSGLVD…MMGMFGGGGK (184 aa)) is M-domain.

The protein belongs to the GTP-binding SRP family. SRP54 subfamily. Component of a signal recognition particle (SRP) complex that consists of a 7SL RNA molecule of 300 nucleotides and six protein subunits: SRP72, SRP68, SRP54, SRP19, SRP14 and SRP9.

The protein localises to the cytoplasm. Its subcellular location is the endoplasmic reticulum. The enzyme catalyses GTP + H2O = GDP + phosphate + H(+). Component of the signal recognition particle (SRP) complex, a ribonucleoprotein complex that mediates the cotranslational targeting of secretory and membrane proteins to the endoplasmic reticulum (ER). As part of the SRP complex, associates with the SRP receptor (SR) component SRPRA to target secretory proteins to the endoplasmic reticulum membrane. Binds to the signal sequence of presecretory proteins when they emerge from the ribosomes. Displays basal GTPase activity, and stimulates reciprocal GTPase activation of the SR subunit SRPRA. Forms a guanosine 5'-triphosphate (GTP)-dependent complex with the SR subunit SRPRA. SR compaction and GTPase mediated rearrangement of SR drive SRP-mediated cotranslational protein translocation into the ER. Requires the presence of SRP9/SRP14 and/or SRP19 to stably interact with RNA. This chain is Signal recognition particle subunit SRP54 1 (SRP-54A), found in Arabidopsis thaliana (Mouse-ear cress).